The primary structure comprises 116 residues: Flagellar transcriptional regulator FlhD (116 aa).

The protein belongs to the FlhD family. In terms of assembly, homodimer; disulfide-linked. Forms a heterohexamer composed of two FlhC and four FlhD subunits. Each FlhC binds a FlhD dimer, forming a heterotrimer, and a hexamer assembles by dimerization of two heterotrimers.

It localises to the cytoplasm. Functions in complex with FlhC as a master transcriptional regulator that regulates transcription of several flagellar and non-flagellar operons by binding to their promoter region. Activates expression of class 2 flagellar genes, including fliA, which is a flagellum-specific sigma factor that turns on the class 3 genes. Also regulates genes whose products function in a variety of physiological pathways. The polypeptide is Flagellar transcriptional regulator FlhD (Pantoea ananatis (strain LMG 20103)).